Consider the following 154-residue polypeptide: Transcriptional repressor NrdR (154 aa).

A zinc finger lies at 3 to 34 (CPFCRHSDSRVIDSRETDEGQAIRRRRSCPEC). Residues 46–136 (VAVVKRSGVT…VYRSFSSADD (91 aa)) form the ATP-cone domain.

Belongs to the NrdR family. Zn(2+) is required as a cofactor.

Its function is as follows. Negatively regulates transcription of bacterial ribonucleotide reductase nrd genes and operons by binding to NrdR-boxes. This is Transcriptional repressor NrdR from Mycobacterium leprae (strain Br4923).